Reading from the N-terminus, the 147-residue chain is D-aminoacyl-tRNA deacylase (147 aa).

The short motif at 136–137 is the Gly-cisPro motif, important for rejection of L-amino acids element; that stretch reads GP.

This sequence belongs to the DTD family. Homodimer.

Its subcellular location is the cytoplasm. It catalyses the reaction glycyl-tRNA(Ala) + H2O = tRNA(Ala) + glycine + H(+). The catalysed reaction is a D-aminoacyl-tRNA + H2O = a tRNA + a D-alpha-amino acid + H(+). An aminoacyl-tRNA editing enzyme that deacylates mischarged D-aminoacyl-tRNAs. Also deacylates mischarged glycyl-tRNA(Ala), protecting cells against glycine mischarging by AlaRS. Acts via tRNA-based rather than protein-based catalysis; rejects L-amino acids rather than detecting D-amino acids in the active site. By recycling D-aminoacyl-tRNA to D-amino acids and free tRNA molecules, this enzyme counteracts the toxicity associated with the formation of D-aminoacyl-tRNA entities in vivo and helps enforce protein L-homochirality. This is D-aminoacyl-tRNA deacylase from Streptococcus agalactiae serotype III (strain NEM316).